The following is a 248-amino-acid chain: MTIKVGVLGAKGRVGQAIVEGVNAAEDLELVASIDRGTPLEKLVESGAEVAVDFTQPASVMDNLEFCIAHGIHAVVGTTGFDSERLAKVEGWTQKEDAGNVLIAPNFAISAVLTMVFAAQAAKFFDSAEVVEYHHPNKLDAPSGTAVHTAQGIANARQEAGLDAMPDKTEQSLDGARGADVDGVHVHAVRMQGMVAHEEVIFGTQGQSLTIRQDSYDRSSFTPGVLLGVREIASHPGLTVGLEKYLGL.

Residues 9–14 (GAKGRV), 77–79 (GTT), and 104–107 (APNF) each bind NAD(+). His-134 serves as the catalytic Proton donor/acceptor. A (S)-2,3,4,5-tetrahydrodipicolinate-binding site is contributed by His-135. Lys-138 (proton donor) is an active-site residue. 144–145 (GT) is a (S)-2,3,4,5-tetrahydrodipicolinate binding site.

The protein belongs to the DapB family.

It is found in the cytoplasm. The catalysed reaction is (S)-2,3,4,5-tetrahydrodipicolinate + NAD(+) + H2O = (2S,4S)-4-hydroxy-2,3,4,5-tetrahydrodipicolinate + NADH + H(+). It carries out the reaction (S)-2,3,4,5-tetrahydrodipicolinate + NADP(+) + H2O = (2S,4S)-4-hydroxy-2,3,4,5-tetrahydrodipicolinate + NADPH + H(+). The protein operates within amino-acid biosynthesis; L-lysine biosynthesis via DAP pathway; (S)-tetrahydrodipicolinate from L-aspartate: step 4/4. Catalyzes the conversion of 4-hydroxy-tetrahydrodipicolinate (HTPA) to tetrahydrodipicolinate. This Corynebacterium aurimucosum (strain ATCC 700975 / DSM 44827 / CIP 107346 / CN-1) (Corynebacterium nigricans) protein is 4-hydroxy-tetrahydrodipicolinate reductase.